Consider the following 284-residue polypeptide: Orotidine 5'-phosphate decarboxylase (284 aa).

Catalysis depends on Lys95, which acts as the Proton donor.

This sequence belongs to the OMP decarboxylase family. Type 2 subfamily.

It carries out the reaction orotidine 5'-phosphate + H(+) = UMP + CO2. The protein operates within pyrimidine metabolism; UMP biosynthesis via de novo pathway; UMP from orotate: step 2/2. This chain is Orotidine 5'-phosphate decarboxylase, found in Leptothrix cholodnii (strain ATCC 51168 / LMG 8142 / SP-6) (Leptothrix discophora (strain SP-6)).